Here is a 122-residue protein sequence, read N- to C-terminus: Flagellar protein FliT (122 aa).

A required for homodimerization region spans residues 1–50; it reads MTSTVEFINRWQRIALLSQSLLELAQRGEWELLLQQEVSYLQSIETVMEK. The tract at residues 60–98 is fliD binding; the sequence is IQDMVAGYIKQTLDNEQRLKGLLQQRLDELSGLIGQSTR.

The protein belongs to the FliT family. Homodimer. Interacts with FliD and FlhC.

It is found in the cytoplasm. The protein resides in the cytosol. Functionally, dual-function protein that regulates the transcription of class 2 flagellar operons and that also acts as an export chaperone for the filament-capping protein FliD. As a transcriptional regulator, acts as an anti-FlhDC factor; it directly binds FlhC, thus inhibiting the binding of the FlhC/FlhD complex to class 2 promoters, resulting in decreased expression of class 2 flagellar operons. As a chaperone, effects FliD transition to the membrane by preventing its premature polymerization, and by directing it to the export apparatus. The chain is Flagellar protein FliT from Salmonella arizonae (strain ATCC BAA-731 / CDC346-86 / RSK2980).